The following is a 436-amino-acid chain: 3-ketoacyl-CoA thiolase (436 aa).

Cysteine 99 functions as the Acyl-thioester intermediate in the catalytic mechanism. Residues histidine 392 and cysteine 422 each act as proton acceptor in the active site.

This sequence belongs to the thiolase-like superfamily. Thiolase family. As to quaternary structure, heterotetramer of two alpha chains (FadJ) and two beta chains (FadI).

Its subcellular location is the cytoplasm. It catalyses the reaction an acyl-CoA + acetyl-CoA = a 3-oxoacyl-CoA + CoA. It functions in the pathway lipid metabolism; fatty acid beta-oxidation. In terms of biological role, catalyzes the final step of fatty acid oxidation in which acetyl-CoA is released and the CoA ester of a fatty acid two carbons shorter is formed. This chain is 3-ketoacyl-CoA thiolase, found in Alteromonas mediterranea (strain DSM 17117 / CIP 110805 / LMG 28347 / Deep ecotype).